Here is a 225-residue protein sequence, read N- to C-terminus: Cytidylate kinase (225 aa).

ATP is bound at residue 11–19 (GPAGAGKST).

The protein belongs to the cytidylate kinase family. Type 1 subfamily.

Its subcellular location is the cytoplasm. The enzyme catalyses CMP + ATP = CDP + ADP. The catalysed reaction is dCMP + ATP = dCDP + ADP. The chain is Cytidylate kinase from Shouchella clausii (strain KSM-K16) (Alkalihalobacillus clausii).